Consider the following 478-residue polypeptide: Putative malate transporter YflS (478 aa).

12 helical membrane-spanning segments follow: residues 12 to 31 (AVKLVPLLITVAVGLIIWFI), 41 to 57 (AWHLFAIFVATIIGFIS), 64 to 81 (AIAIFALAVTALTGTLSI), 96 to 118 (IVIAFFISRGFIKTGLGARISYV), 187 to 209 (GFQGNLITSAMFLTAMAANPLIA), 222 to 244 (WTSWAIAAIVPGLVSLIITPLVI), 277 to 296 (LSMVIVFLLVLVLWIFGGSF), 300 to 319 (ATTTALIGLAVLLLSQVLTW), 332 to 354 (LTWFAALVMLANFLNELGMVSWF), 364 to 386 (GFSWIVAFIILIVVYYYSHYFFA), 398 to 420 (AFLAVVVAAGAPPLLAALSLAFI), and 450 to 472 (WSIGFILSIVHIIVWLVIGGLWW).

Belongs to the SLC13A/DASS transporter (TC 2.A.47) family. DIT1 subfamily.

It localises to the cell membrane. Might be a malate transporter. This is Putative malate transporter YflS (yflS) from Bacillus subtilis (strain 168).